A 512-amino-acid chain; its full sequence is 2-isopropylmalate synthase (512 aa).

The 263-residue stretch at 5–267 (VVIFDTTLRD…ETSINKSEIY (263 aa)) folds into the Pyruvate carboxyltransferase domain. Residues Asp14, His202, His204, and Asn238 each coordinate Mn(2+). The regulatory domain stretch occupies residues 391 to 512 (SLEYLHITSG…LPKAKTERAV (122 aa)).

The protein belongs to the alpha-IPM synthase/homocitrate synthase family. LeuA type 1 subfamily. As to quaternary structure, homodimer. Mn(2+) is required as a cofactor.

Its subcellular location is the cytoplasm. It catalyses the reaction 3-methyl-2-oxobutanoate + acetyl-CoA + H2O = (2S)-2-isopropylmalate + CoA + H(+). It participates in amino-acid biosynthesis; L-leucine biosynthesis; L-leucine from 3-methyl-2-oxobutanoate: step 1/4. Its function is as follows. Catalyzes the condensation of the acetyl group of acetyl-CoA with 3-methyl-2-oxobutanoate (2-ketoisovalerate) to form 3-carboxy-3-hydroxy-4-methylpentanoate (2-isopropylmalate). This Heliobacterium modesticaldum (strain ATCC 51547 / Ice1) protein is 2-isopropylmalate synthase.